Here is a 231-residue protein sequence, read N- to C-terminus: Putative carboxymethylenebutenolidase (231 aa).

Catalysis depends on residues C118, D167, and H199.

This sequence belongs to the dienelactone hydrolase family.

The enzyme catalyses 2-(5-oxo-2,5-dihydrofuran-2-ylidene)acetate + H2O = 4-oxohex-2-enedioate + H(+). The chain is Putative carboxymethylenebutenolidase from Aquifex aeolicus (strain VF5).